The following is a 402-amino-acid chain: Thyroid hormone receptor alpha (402 aa).

The tract at residues 1–22 is disordered; the sequence is MEQKPSTLDPLSEPEDTRWLDG. A modulating region spans residues 1-50; it reads MEQKPSTLDPLSEPEDTRWLDGKRKRKSSQCLVKSSMSGYIPSYLDKDEQ. At S12 the chain carries Phosphoserine; by CK2. Residue S28 is modified to Phosphoserine. Residues C51, C54, C68, C71, C89, C95, C105, and C108 each coordinate Zn(2+). 2 consecutive NR C4-type zinc fingers follow at residues 51–71 and 89–113; these read CVVC…CAGC and CKYD…FKKC. Residues 51–125 constitute a DNA-binding region (nuclear receptor); sequence CVVCGDKATG…VGMAMDLVLY (75 aa). In terms of domain architecture, NR LBD spans 161-402; the sequence is EEWELIHVVT…ELFPPLFLEV (242 aa). The 3,3',5-triiodo-L-thyronine site is built by R226 and S275.

This sequence belongs to the nuclear hormone receptor family. NR1 subfamily. In terms of assembly, probably interacts with SFPQ.

It is found in the nucleus. Functionally, nuclear hormone receptor that can act as a repressor or activator of transcription. High affinity receptor for thyroid hormones, including triiodothyronine and thyroxine. The sequence is that of Thyroid hormone receptor alpha (THRA) from Pygoscelis adeliae (Adelie penguin).